The following is a 377-amino-acid chain: 5-hydroxytryptamine receptor 1D (377 aa).

N-linked (GlcNAc...) asparagine glycosylation is found at Asn5, Asn17, and Asn21. A run of 3 helical transmembrane segments spans residues 39-64 (ISLAVVLSIITVATVLSNTFVLTTIL), 76-97 (LIGSLATTDLLVSILVMPISIA), and 110-134 (LCDIWVSSDITCCTASILHLCVIAL). Cys111 and Cys188 are disulfide-bonded. 2 residues coordinate serotonin: Asp118 and Cys122. The short motif at 135–137 (DRY) is the DRY motif; important for ligand-induced conformation changes element. 4 helical membrane passes run 155-176 (AAAMIAVVWAISICISIPPLFW), 195-218 (ISYTIYSTCGAFYIPSVLLIVLYG), 301-326 (KTLGIILGAFIGCWLPFFVASLVLPI), and 336-359 (GLFDFFTWLGYLNSLINPIIYTVF). Ser321 is a serotonin binding site. The NPxxY motif; important for ligand-induced conformation changes and signaling motif lies at 352 to 356 (NPIIY).

This sequence belongs to the G-protein coupled receptor 1 family. In terms of assembly, homodimer. Heterodimer with HTR1B.

It localises to the cell membrane. In terms of biological role, G-protein coupled receptor for 5-hydroxytryptamine (serotonin). Also functions as a receptor for ergot alkaloid derivatives, various anxiolytic and antidepressant drugs and other psychoactive substances. Ligand binding causes a conformation change that triggers signaling via guanine nucleotide-binding proteins (G proteins) and modulates the activity of downstream effectors, such as adenylate cyclase. HTR1D is coupled to G(i)/G(o) G alpha proteins and mediates inhibitory neurotransmission by inhibiting adenylate cyclase activity. Regulates the release of 5-hydroxytryptamine in the brain, and thereby affects neural activity. May also play a role in regulating the release of other neurotransmitters. May play a role in vasoconstriction. The sequence is that of 5-hydroxytryptamine receptor 1D (HTR1D) from Oryctolagus cuniculus (Rabbit).